The sequence spans 115 residues: NAD(P)H-quinone oxidoreductase subunit M (115 aa).

The protein belongs to the complex I NdhM subunit family. As to quaternary structure, NDH-1 can be composed of about 15 different subunits; different subcomplexes with different compositions have been identified which probably have different functions.

The protein resides in the cellular thylakoid membrane. The enzyme catalyses a plastoquinone + NADH + (n+1) H(+)(in) = a plastoquinol + NAD(+) + n H(+)(out). The catalysed reaction is a plastoquinone + NADPH + (n+1) H(+)(in) = a plastoquinol + NADP(+) + n H(+)(out). Its function is as follows. NDH-1 shuttles electrons from an unknown electron donor, via FMN and iron-sulfur (Fe-S) centers, to quinones in the respiratory and/or the photosynthetic chain. The immediate electron acceptor for the enzyme in this species is believed to be plastoquinone. Couples the redox reaction to proton translocation, and thus conserves the redox energy in a proton gradient. Cyanobacterial NDH-1 also plays a role in inorganic carbon-concentration. The protein is NAD(P)H-quinone oxidoreductase subunit M of Prochlorococcus marinus (strain MIT 9313).